The primary structure comprises 364 residues: DNA primase large subunit PriL (364 aa).

Residues Cys-237, Cys-309, Cys-318, and Cys-325 each coordinate [4Fe-4S] cluster. The disordered stretch occupies residues 345-364; sequence MQNDNEKGHEEKKEGETPPQ.

This sequence belongs to the eukaryotic-type primase large subunit family. Heterodimer of a small subunit (PriS) and a large subunit (PriL). [4Fe-4S] cluster serves as cofactor.

Functionally, regulatory subunit of DNA primase, an RNA polymerase that catalyzes the synthesis of short RNA molecules used as primers for DNA polymerase during DNA replication. Stabilizes and modulates the activity of the small subunit, increasing the rate of DNA synthesis, and conferring RNA synthesis capability. The DNA polymerase activity may enable DNA primase to also catalyze primer extension after primer synthesis. May also play a role in DNA repair. This is DNA primase large subunit PriL from Methanococcoides burtonii (strain DSM 6242 / NBRC 107633 / OCM 468 / ACE-M).